Here is a 602-residue protein sequence, read N- to C-terminus: Elongation factor 4 (602 aa).

The tr-type G domain occupies 7–189 (SKIRNFCIIA…AVVSRIPHPQ (183 aa)). Residues 19–24 (DHGKST) and 136–139 (NKVD) each bind GTP.

It belongs to the TRAFAC class translation factor GTPase superfamily. Classic translation factor GTPase family. LepA subfamily.

The protein resides in the cell inner membrane. It carries out the reaction GTP + H2O = GDP + phosphate + H(+). Its function is as follows. Required for accurate and efficient protein synthesis under certain stress conditions. May act as a fidelity factor of the translation reaction, by catalyzing a one-codon backward translocation of tRNAs on improperly translocated ribosomes. Back-translocation proceeds from a post-translocation (POST) complex to a pre-translocation (PRE) complex, thus giving elongation factor G a second chance to translocate the tRNAs correctly. Binds to ribosomes in a GTP-dependent manner. The protein is Elongation factor 4 of Prochlorococcus marinus subsp. pastoris (strain CCMP1986 / NIES-2087 / MED4).